A 497-amino-acid polypeptide reads, in one-letter code: MCELYSKQETLALRRKHIGPSCKVFFAADPIKIVRAQRQYMFDEKGDQYLDCINNVAHVGHCHPEVVKAAQKQMELLNTNSRFLHDNIVEYAKRLSATLPDRLSVCYFTNSGSEANDLALRLARQFRGHQDVITLDHAYHGHLSSLIEISPYKFQKGKDVKKEFVHVAPAPDTYRGKYREDHVDPASAYADEVKKIIDEAHNSGRKIAAFIAESMQSCGGQIIPPAGYFQKVAEYVRGAGGVFIADEVQVGFGRVGKHFWSFQMFGEDFVPDIVTMGKPMGNGHPMACVVTTKEIAEAFSASGMEYFNTYGGNPVSSAVGLAVLDVIKNEDLQGNATRVGNYLTELLNKQKTKHTLIGDIRGVGLFIGIDLVKDHQQRTPATAEAQHIIYKMKEKRVLLSADGPHRNVLKIKPPMCFTEEDAKFMVEQLDGILTGLEEATGAETESGISKNTPCRTKMPKEAQSELLRDSSLESRENPSQKRNGLCTDSLLSKRLRT.

Lysine 278 carries the post-translational modification N6-(pyridoxal phosphate)lysine. The segment at 440–497 is disordered; that stretch reads TGAETESGISKNTPCRTKMPKEAQSELLRDSSLESRENPSQKRNGLCTDSLLSKRLRT. Positions 458 to 479 are enriched in basic and acidic residues; it reads MPKEAQSELLRDSSLESRENPS.

The protein belongs to the class-III pyridoxal-phosphate-dependent aminotransferase family. Homotetramer. The cofactor is pyridoxal 5'-phosphate.

The protein localises to the mitochondrion. It catalyses the reaction phosphoethanolamine + H2O = acetaldehyde + NH4(+) + phosphate. Catalyzes the pyridoxal-phosphate-dependent breakdown of phosphoethanolamine, converting it to ammonia, inorganic phosphate and acetaldehyde. The polypeptide is Ethanolamine-phosphate phospho-lyase (ETNPPL) (Bos taurus (Bovine)).